A 1021-amino-acid polypeptide reads, in one-letter code: tRNA wybutosine-synthesizing protein 4 (1021 aa).

S-adenosyl-L-methionine is bound by residues R68, D122, 171–172 (DL), and E198. The region spanning 826-980 (PTEAPANLAE…STGRDVYGNR (155 aa)) is the JmjC domain.

Belongs to the methyltransferase superfamily. LCMT family.

The catalysed reaction is 7-[(3S)-3-amino-3-carboxypropyl]wyosine(37) in tRNA(Phe) + S-adenosyl-L-methionine = 7-[(3S)-(3-amino-3-methoxycarbonyl)propyl]wyosine(37) in tRNA(Phe) + S-adenosyl-L-homocysteine. It catalyses the reaction 7-[(3S)-(3-amino-3-methoxycarbonyl)propyl]wyosine(37) in tRNA(Phe) + S-adenosyl-L-methionine + CO2 = wybutosine(37) in tRNA(Phe) + S-adenosyl-L-homocysteine + 2 H(+). Its pathway is tRNA modification; wybutosine-tRNA(Phe) biosynthesis. In terms of biological role, probable S-adenosyl-L-methionine-dependent methyltransferase that acts as a component of the wybutosine biosynthesis pathway. Wybutosine is a hyper modified guanosine with a tricyclic base found at the 3'-position adjacent to the anticodon of eukaryotic phenylalanine tRNA. May methylate the carboxyl group of leucine residues to form alpha-leucine ester residues. The sequence is that of tRNA wybutosine-synthesizing protein 4 (PPM2) from Gibberella zeae (strain ATCC MYA-4620 / CBS 123657 / FGSC 9075 / NRRL 31084 / PH-1) (Wheat head blight fungus).